We begin with the raw amino-acid sequence, 254 residues long: Probable phosphomannomutase (254 aa).

Catalysis depends on aspartate 14, which acts as the Nucleophile. Positions 14 and 16 each coordinate Mg(2+). Catalysis depends on aspartate 16, which acts as the Proton donor/acceptor. The alpha-D-mannose 1-phosphate site is built by arginine 23, arginine 129, arginine 140, arginine 147, serine 185, and aspartate 187. 4 residues coordinate Mg(2+): aspartate 214, phenylalanine 226, aspartate 228, and threonine 231.

The protein belongs to the eukaryotic PMM family. As to quaternary structure, homodimer.

It is found in the cytoplasm. It carries out the reaction alpha-D-mannose 1-phosphate = D-mannose 6-phosphate. The protein operates within nucleotide-sugar biosynthesis; GDP-alpha-D-mannose biosynthesis; alpha-D-mannose 1-phosphate from D-fructose 6-phosphate: step 2/2. Functionally, involved in the synthesis of the GDP-mannose and dolichol-phosphate-mannose required for a number of critical mannosyl transfer reactions. The chain is Probable phosphomannomutase from Caenorhabditis elegans.